A 652-amino-acid polypeptide reads, in one-letter code: Acetyl-coenzyme A synthetase (652 aa).

CoA is bound by residues Arg191–Arg194, Thr311, and Asn335. ATP-binding positions include Gly387–Pro389, Asp411–Thr416, Asp500, and Arg515. Residue Ser523 coordinates CoA. Residue Arg526 participates in ATP binding. Positions 537, 539, and 542 each coordinate Mg(2+). Arg584 lines the CoA pocket. The residue at position 609 (Lys609) is an N6-acetyllysine.

Belongs to the ATP-dependent AMP-binding enzyme family. The cofactor is Mg(2+). In terms of processing, acetylated. Deacetylation by the SIR2-homolog deacetylase activates the enzyme.

It catalyses the reaction acetate + ATP + CoA = acetyl-CoA + AMP + diphosphate. In terms of biological role, catalyzes the conversion of acetate into acetyl-CoA (AcCoA), an essential intermediate at the junction of anabolic and catabolic pathways. Acs undergoes a two-step reaction. In the first half reaction, Acs combines acetate with ATP to form acetyl-adenylate (AcAMP) intermediate. In the second half reaction, it can then transfer the acetyl group from AcAMP to the sulfhydryl group of CoA, forming the product AcCoA. Its function is as follows. Enables the cell to use acetate during aerobic growth to generate energy via the TCA cycle, and biosynthetic compounds via the glyoxylate shunt. Acetylates CheY, the response regulator involved in flagellar movement and chemotaxis. The polypeptide is Acetyl-coenzyme A synthetase (Citrobacter koseri (strain ATCC BAA-895 / CDC 4225-83 / SGSC4696)).